The primary structure comprises 144 residues: Maximins 3/H16 (144 aa).

The N-terminal stretch at 1 to 18 is a signal peptide; the sequence is MNFKYIVAVSFLIASAYA. Propeptides lie at residues 19–43 and 73–122; these read RSVQ…REIR and RTAE…KKEK. Position 143 is an isoleucine amide (I143).

This sequence belongs to the bombinin family. Expressed by the skin glands.

The protein resides in the secreted. Maximin-3 shows antibacterial activity against both Gram-positive and Gram-negative bacteria. It also shows antimicrobial activity against the fungus C.albicans, but not against A.flavus nor P.uticale. It has little hemolytic activity. It possess a significant cytotoxicity against tumor cell lines. It possess a significant anti-HIV activity. It shows high spermicidal activity. Its function is as follows. Maximin-H16 shows antimicrobial activity against bacteria and against the fungus C.albicans. Shows strong hemolytic activity. The polypeptide is Maximins 3/H16 (Bombina maxima (Giant fire-bellied toad)).